A 511-amino-acid polypeptide reads, in one-letter code: Serine/threonine-protein kinase Nek3 (511 aa).

M1 is modified (N-acetylmethionine). Residues 1-282 (MDNYTVLRVI…EQILDEIKIS (282 aa)) are interaction with VAV2. Positions 4–255 (YTVLRVIGQG…ATTLLCRGSL (252 aa)) constitute a Protein kinase domain. ATP is bound by residues 10 to 18 (IGQGSFGRA) and K33. The active-site Proton acceptor is D125. T159 carries the phosphothreonine; by autocatalysis modification. Disordered regions lie at residues 299-370 (LGEA…GPSS) and 443-511 (GPLS…GERA). Residues 309-321 (EEERGRKCSHTEL) are compositionally biased toward basic and acidic residues. Over residues 472–485 (LDEEDTDFEEDNEN) the composition is skewed to acidic residues. T477 carries the post-translational modification Phosphothreonine. Residues 498 to 511 (YGDGPGGQLLGERA) show a composition bias toward gly residues.

Belongs to the protein kinase superfamily. NEK Ser/Thr protein kinase family. NIMA subfamily. Interacts with PXN, PRLR, VAV1 and VAV2 and this interaction is prolactin-dependent. Requires Mg(2+) as cofactor. Post-translationally, phosphorylation at Thr-477 regulates its catalytic activity. As to expression, brain.

It is found in the cytoplasm. The protein localises to the cell projection. Its subcellular location is the axon. The catalysed reaction is L-seryl-[protein] + ATP = O-phospho-L-seryl-[protein] + ADP + H(+). The enzyme catalyses L-threonyl-[protein] + ATP = O-phospho-L-threonyl-[protein] + ADP + H(+). Functionally, protein kinase which influences neuronal morphogenesis and polarity through effects on microtubules. Regulates microtubule acetylation in neurons. Contributes to prolactin-mediated phosphorylation of PXN and VAV2. This chain is Serine/threonine-protein kinase Nek3 (Nek3), found in Mus musculus (Mouse).